The primary structure comprises 1138 residues: Envelopment polyprotein (1138 aa).

Residues 1–18 (MEGWYLVVLGVCYTLTLA) form the signal peptide. At 19 to 487 (MPKTIYELKM…CVPGLHGWAT (469 aa)) the chain is on the lumenal side. 11 disulfide bridges follow: Cys30/Cys155, Cys64/Cys161, Cys113/Cys132, Cys137/Cys142, Cys179/Cys189, Cys214/Cys250, Cys239/Cys354, Cys379/Cys438, Cys383/Cys392, Cys408/Cys427, and Cys455/Cys478. N-linked (GlcNAc...) asparagine; by host glycosylation occurs at Asn138. Asn350 is a glycosylation site (N-linked (GlcNAc...) asparagine; by host). Residue Asn402 is glycosylated (N-linked (GlcNAc...) asparagine; by host). A helical transmembrane segment spans residues 488–508 (VMLLSTFCFGWVLIPAVTLII). Over 509–630 (LKCLRVLTFS…LGVFRYKSRC (122 aa)) the chain is Cytoplasmic. The interval 519–536 (CSHYTNESKFKFILEKVK) is binding to the ribonucleoprotein. 2 CCHC-type zinc fingers span residues 548–568 (CDVC…RQSC) and 573–594 (CPYC…YSIC). Binding to the ribonucleoprotein regions lie at residues 591 to 608 (YSIC…KKSL), 595 to 606 (KLTGRFQEALKK), and 614 to 628 (KKGC…RYKS). The interaction with host TRAF3 stretch occupies residues 610-637 (KPEVKKGCYRTLGVFRYKSRCYVGLVWC). The ITAM domain occupies 614–637 (KKGCYRTLGVFRYKSRCYVGLVWC). Residues Tyr618 and Tyr631 each carry the phosphotyrosine modification. Residues 618–621 (YRTL) carry the YxxL motif. Residues 631-651 (YVGLVWCLLLTCEIVIWAASA) traverse the membrane as a helical segment. At 652–1107 (ETPLMESGWS…EWLLGILNGN (456 aa)) the chain is on the lumenal side. 8 disulfides stabilise this stretch: Cys738/Cys773, Cys742/Cys780, Cys754/Cys887, Cys768/Cys898, Cys783/Cys906, Cys809/Cys818, Cys826/Cys835, and Cys866/Cys870. A fusion loop region spans residues 760–780 (YQYETGWGCNPGDCPGVGTGC). An N-linked (GlcNAc...) asparagine; by host glycan is attached at Asn930. 5 disulfides stabilise this stretch: Cys972/Cys1002, Cys995/Cys1047, Cys1012/Cys1017, Cys1048/Cys1053, and Cys1087/Cys1091. A helical membrane pass occupies residues 1108–1128 (WIVVVVLVVILILSIIMFSVL). Residues 1124-1138 (MFSVLCPRRGHKKTV) are binding to the ribonucleoprotein. The Cytoplasmic segment spans residues 1129-1138 (CPRRGHKKTV).

Belongs to the hantavirus envelope glycoprotein family. Homodimer. Homotetramer; forms heterotetrameric Gn-Gc spikes in the pre-fusion conformation. Interacts (via C-terminus) with the nucleoprotein. Interacts with host TUFM; this interaction contributes to the virus-induced degradation of mitochondria by autophagy, which leads to degradation of host MAVS and inhibition of type I interferon (IFN) responses. Interacts with host MAP1LC3B; this interaction contributes to the virus-induced degradation of mitochondria by autophagy, which leads to degradation of host MAVS and inhibition of type I interferon (IFN) responses. Interacts (via C-terminus) with host TRAF3; this interaction inhibits the formation of TRAF3-TBK1 complexes. In terms of assembly, homodimer. Homotetramer; forms heterotetrameric Gn-Gc spikes in the pre-fusion conformation. Homotrimer; forms homotrimer in the post-fusion conformation at acidic pH. Interacts (via C-terminus) with the nucleoprotein. In terms of processing, envelope polyprotein precursor is quickly cleaved in vivo just after synthesis, presumably by host signal peptidase.

The protein resides in the virion membrane. It is found in the host cell surface. It localises to the host Golgi apparatus membrane. Its subcellular location is the host endoplasmic reticulum membrane. The protein localises to the host mitochondrion. Its function is as follows. Forms homotetramers with glycoprotein C at the surface of the virion. Attaches the virion to host cell receptors including integrin ITGAV/ITGB3. This attachment induces virion internalization possibly through clathrin-dependent endocytosis and dynamin-independent macropinocytosis. Mediates the assembly and budding of infectious virus particles through its interaction with the nucleocapsid protein and the viral genome. May dysregulate normal immune and endothelial cell responses through an ITAM motif. Translocates to mitochondria, binds to host TUFM and recruits MAP1LC3B. These interactions induce mitochondrial autophagy and therefore destruction of host MAVS leading to inhibition of type I interferon (IFN) responses. Concomitant breakdown of glycoprotein N is apparently prevented by the nucleoprotein that may inhibit Gn-stimulated autophagosome-lysosome fusion. Interacts with the viral genomic RNA. Inhibits the host RIG-I/TBK1 pathway by disrupting the formation of TBK1-TRAF3 complexes and downstream signaling responses required for IFN-beta transcription. In terms of biological role, forms homotetramers with glycoprotein N at the surface of the virion. Attaches the virion to host cell receptors including integrin ITGAV/ITGB3. This attachment induces virion internalization predominantly through clathrin-dependent endocytosis. Class II fusion protein that promotes fusion of viral membrane with host endosomal membrane after endocytosis of the virion. The sequence is that of Envelopment polyprotein (GP) from Abrothrix longipilis (Long-haired grass mouse).